Reading from the N-terminus, the 107-residue chain is Nucleoid-associated protein RC1337 (107 aa).

This sequence belongs to the YbaB/EbfC family. Homodimer.

The protein localises to the cytoplasm. Its subcellular location is the nucleoid. Its function is as follows. Binds to DNA and alters its conformation. May be involved in regulation of gene expression, nucleoid organization and DNA protection. This is Nucleoid-associated protein RC1337 from Rickettsia conorii (strain ATCC VR-613 / Malish 7).